A 509-amino-acid polypeptide reads, in one-letter code: Histidine ammonia-lyase (509 aa).

The 5-imidazolinone (Ala-Gly) cross-link spans 142–144 (ASG). 2,3-didehydroalanine (Ser) is present on Ser143.

It belongs to the PAL/histidase family. Contains an active site 4-methylidene-imidazol-5-one (MIO), which is formed autocatalytically by cyclization and dehydration of residues Ala-Ser-Gly.

Its subcellular location is the cytoplasm. It carries out the reaction L-histidine = trans-urocanate + NH4(+). The protein operates within amino-acid degradation; L-histidine degradation into L-glutamate; N-formimidoyl-L-glutamate from L-histidine: step 1/3. The protein is Histidine ammonia-lyase of Pseudomonas aeruginosa (strain LESB58).